The following is a 316-amino-acid chain: MSFASETKKELTKLEMKECCEKAELSALLRMNGSLSFSNRRLSIDIQTENAAIARRIYTLLKKGYNVTVELLVRKKMRLKKNNVYIVRLVEKSREILADLQIVREDFSFIRNISQELIEKKCCKRSYLRGAFLAGGSVNNPETSSYHLEIFSLYKEHNDSICELMNGFDLNSKTLERRKGYITYLKEAEKITEFLNIIGAHNALLKFEDIRIVRDMRNSVNRLVNCETANLNKTIGAALRQIENIRYIDETVGLDILPDKLREIAQLRVNYQDVTLKELGEMVSGGKISKSGINHRLRKIDEIAEKLRAGETVVKK.

Residues 275 to 309 constitute a DNA-binding region (H-T-H motif); it reads TLKELGEMVSGGKISKSGINHRLRKIDEIAEKLRA.

It belongs to the WhiA family.

Involved in cell division and chromosome segregation. The polypeptide is Probable cell division protein WhiA (Bacillus cytotoxicus (strain DSM 22905 / CIP 110041 / 391-98 / NVH 391-98)).